The primary structure comprises 122 residues: Basic phospholipase A2 (122 aa).

Cystine bridges form between C26/C115, C28/C44, C43/C95, C49/C122, C50/C88, C57/C81, and C75/C86. Positions 27, 29, and 31 each coordinate Ca(2+). Residue H47 is part of the active site. A Ca(2+)-binding site is contributed by D48. The active site involves D89.

This sequence belongs to the phospholipase A2 family. Group II subfamily. D49 sub-subfamily. In terms of assembly, homodimer. Ca(2+) is required as a cofactor. As to expression, expressed by the venom gland.

It localises to the secreted. The enzyme catalyses a 1,2-diacyl-sn-glycero-3-phosphocholine + H2O = a 1-acyl-sn-glycero-3-phosphocholine + a fatty acid + H(+). Functionally, snake venom phospholipase A2 (PLA2) that inhibits neuromuscular transmission by blocking acetylcholine release from the nerve termini. PLA2 catalyzes the calcium-dependent hydrolysis of the 2-acyl groups in 3-sn-phosphoglycerides. This Gloydius blomhoffii (Mamushi) protein is Basic phospholipase A2.